The primary structure comprises 146 residues: MLLQGTHRIGRMAMLLALADESESSVLSIPKGWKYCTGKVGSMNSQKVVAAMETAAKSNQVIETDVYRETHALYHAIMEALYGVTRGQIQLADVLRTVGLRFAIVRGTPYDGKKEGEWVAVALYGTIGAPVKGSEHEAIGLGINHI.

Belongs to the HutP family. In terms of assembly, homohexamer.

Functionally, antiterminator that binds to cis-acting regulatory sequences on the mRNA in the presence of histidine, thereby suppressing transcription termination and activating the hut operon for histidine utilization. This is Hut operon positive regulatory protein from Bacillus cytotoxicus (strain DSM 22905 / CIP 110041 / 391-98 / NVH 391-98).